Here is a 91-residue protein sequence, read N- to C-terminus: Transcription factor ILI3 (91 aa).

The bHLH domain occupies 3–58; the sequence is SRRGGGGGGGRITDEEINELISKLQALLPESSRSRGASRSSASKLLKETCSYIKSL.

Belongs to the bHLH protein family.

Functionally, atypical and probable non DNA-binding bHLH transcription that integrates multiple signaling pathways to regulate cell elongation and plant development. The protein is Transcription factor ILI3 (ILI3) of Oryza sativa subsp. indica (Rice).